A 493-amino-acid polypeptide reads, in one-letter code: Ectonucleotide pyrophosphatase/phosphodiesterase 2 (493 aa).

The Cytoplasmic portion of the chain corresponds to 1–28 (MLLFEQPVDLEKNNEDDTNIKPFAISRH). Residues 29-45 (FLLKLLLCGIILIELLL) traverse the membrane as a helical; Signal-anchor for type II membrane protein segment. At 46 to 493 (YSKCPKPIDN…KTKKEKSLLQ (448 aa)) the chain is on the extracellular side. N-linked (GlcNAc...) asparagine glycans are attached at residues Asn62, Asn69, and Asn112. The interval 76-438 (TLTILISIDG…IGIMGTHGYN (363 aa)) is phosphodiesterase. Thr127 functions as the Nucleophile in the catalytic mechanism. Residues Asn153 and Asn441 are each glycosylated (N-linked (GlcNAc...) asparagine).

The protein belongs to the nucleotide pyrophosphatase/phosphodiesterase family. Autophosphorylated as part of the catalytic cycle of phosphodiesterase/pyrophosphatase activity.

It localises to the membrane. The catalysed reaction is Hydrolytically removes 5'-nucleotides successively from the 3'-hydroxy termini of 3'-hydroxy-terminated oligonucleotides.. The enzyme catalyses a ribonucleoside 5'-triphosphate + H2O = a ribonucleoside 5'-phosphate + diphosphate + H(+). It catalyses the reaction a 2'-deoxyribonucleoside 5'-triphosphate + H2O = a 2'-deoxyribonucleoside 5'-phosphate + diphosphate + H(+). Its function is as follows. Mediates extracellular nucleotide derived phosphate hydrolysis along with NPP1 and PHO5. This is Ectonucleotide pyrophosphatase/phosphodiesterase 2 (NPP2) from Saccharomyces cerevisiae (strain ATCC 204508 / S288c) (Baker's yeast).